Consider the following 251-residue polypeptide: Probable transcriptional regulatory protein Blon_1155/BLIJ_1182 (251 aa).

This sequence belongs to the TACO1 family.

The protein localises to the cytoplasm. The chain is Probable transcriptional regulatory protein Blon_1155/BLIJ_1182 from Bifidobacterium longum subsp. infantis (strain ATCC 15697 / DSM 20088 / JCM 1222 / NCTC 11817 / S12).